The sequence spans 466 residues: Asparagine--tRNA ligase (466 aa).

Belongs to the class-II aminoacyl-tRNA synthetase family. As to quaternary structure, homodimer.

It localises to the cytoplasm. The enzyme catalyses tRNA(Asn) + L-asparagine + ATP = L-asparaginyl-tRNA(Asn) + AMP + diphosphate + H(+). This Shewanella loihica (strain ATCC BAA-1088 / PV-4) protein is Asparagine--tRNA ligase.